The following is a 151-amino-acid chain: Putative pre-16S rRNA nuclease (151 aa).

This sequence belongs to the YqgF nuclease family.

The protein resides in the cytoplasm. Could be a nuclease involved in processing of the 5'-end of pre-16S rRNA. This Prochlorococcus marinus (strain MIT 9515) protein is Putative pre-16S rRNA nuclease.